A 916-amino-acid chain; its full sequence is Extracellular signal-regulated kinase 7 (916 aa).

Residues 25–319 (FDVRKRMGKG…AKEAIRHPYV (295 aa)) form the Protein kinase domain. Residues 31–39 (MGKGAYGIV) and Lys-54 each bind ATP. Asp-149 (proton acceptor) is an active-site residue. Polar residues-rich tracts occupy residues 364-376 (CSNR…TPSS) and 390-403 (QART…TTSP). Disordered stretches follow at residues 364–419 (CSNR…TQSR), 452–477 (PPAA…KSVP), 588–608 (PSET…QMKR), 711–742 (KKLQ…SQNY), 792–813 (ELNP…PGRD), and 883–916 (CRHR…PESN). Composition is skewed to basic and acidic residues over residues 590–608 (ETEH…QMKR), 715–730 (RSKE…RRAL), and 800–811 (GGRDSGSEHSPG). A compositionally biased stretch (basic residues) spans 883 to 892 (CRHRHHKPNH). Residues 894-903 (APYDHMRPTE) show a composition bias toward basic and acidic residues.

The protein belongs to the protein kinase superfamily. Ser/Thr protein kinase family.

The catalysed reaction is L-seryl-[protein] + ATP = O-phospho-L-seryl-[protein] + ADP + H(+). It catalyses the reaction L-threonyl-[protein] + ATP = O-phospho-L-threonyl-[protein] + ADP + H(+). In terms of biological role, atypical MAPK protein that regulates protein secretion in a kinase activity-dependent manner. In response to starvation regulates protein secretion by mediating transitional endoplasmic reticulum site disassembly. Mediates inhibition of insulin-like peptide secretion upon disturbed ribosome biogenesis and acts as a downstream effector of TP53. This Drosophila melanogaster (Fruit fly) protein is Extracellular signal-regulated kinase 7.